The sequence spans 495 residues: Potassium voltage-gated channel subfamily A member 1 (495 aa).

The tract at residues 1–30 is disordered; that stretch reads MTVMSGENADEASAAPGHPQDGSYPRQADH. Residues 1 to 128 form a tetramerization domain region; the sequence is MTVMSGENAD…FYELGEEAME (128 aa). Residues 1-164 lie on the Cytoplasmic side of the membrane; the sequence is MTVMSGENAD…LLFEYPESSG (164 aa). At Ser-23 the chain carries Phosphoserine. A helical membrane pass occupies residues 165 to 186; sequence PARVIAIVSVMVILISIVIFCL. Over 187-220 the chain is Extracellular; the sequence is ETLPELKDDKDFTGTIHRIDNTTVIYTSNIFTDP. Asn-207 carries an N-linked (GlcNAc...) asparagine glycan. Residues 221-242 traverse the membrane as a helical segment; sequence FFIVETLCIIWFSFELVVRFFA. Cys-243 carries S-palmitoyl cysteine lipidation. Residues 243–253 are Cytoplasmic-facing; sequence CPSKTDFFKNI. The chain crosses the membrane as a helical span at residues 254 to 274; that stretch reads MNFIDIVAIIPYFITLGTEIA. At 275–287 the chain is on the extracellular side; that stretch reads EQEGNQKGEQATS. The helical; Voltage-sensor transmembrane segment at 288-308 threads the bilayer; sequence LAILRVIRLVRVFRIFKLSRH. Residues 309–323 lie on the Cytoplasmic side of the membrane; the sequence is SKGLQILGQTLKASM. Residues 310–323 form an S4-S5 linker region; it reads KGLQILGQTLKASM. A Phosphoserine; by PKA modification is found at Ser-322. Residues 324–345 traverse the membrane as a helical segment; the sequence is RELGLLIFFLFIGVILFSSAVY. The Extracellular portion of the chain corresponds to 346–359; that stretch reads FAEAEEAESHFSSI. Residues 360–371 constitute an intramembrane region (helical); that stretch reads PDAFWWAVVSMT. Positions 372–377 match the Selectivity filter motif; sequence TVGYGD. Residues 372–379 lie within the membrane without spanning it; sequence TVGYGDMY. Residues 380-386 lie on the Extracellular side of the membrane; the sequence is PVTIGGK. A helical membrane pass occupies residues 387 to 415; that stretch reads IVGSLCAIAGVLTIALPVPVIVSNFNYFY. At 416-495 the chain is on the cytoplasmic side; it reads HRETEGEEQA…VNKSKLLTDV (80 aa). 2 positions are modified to phosphoserine: Ser-437 and Ser-439. Ser-446 is subject to Phosphoserine; by PKA. Residues 493-495 carry the PDZ-binding motif; sequence TDV.

The protein belongs to the potassium channel family. A (Shaker) (TC 1.A.1.2) subfamily. Kv1.1/KCNA1 sub-subfamily. As to quaternary structure, homotetramer and heterotetramer with other channel-forming alpha subunits, such as KCNA2, KCNA4, KCNA5, KCNA6 and KCNA7. Channel activity is regulated by interaction with the beta subunits KCNAB1 and KCNAB2. Identified in a complex with KCNA2 and KCNAB2. Interacts (via C-terminus) with the PDZ domains of DLG1, DLG2 and DLG4. Interacts with LGI1 within a complex containing LGI1, KCNA4 and KCNAB1. Interacts (via cytoplasmic N-terminal domain) with KCNRG; this inhibits channel activity. Interacts with ANK3; this inhibits channel activity. Interacts (via N-terminus) with STX1A; this promotes channel inactivation. Interacts (via N-terminus) with the heterodimer formed by GNB1 and GNG2; this promotes channel inactivation. Can interact simultaneously with STX1A and the heterodimer formed by GNB1 and GNG2. Interacts with ADAM11. Palmitoylated on Cys-243; which may be required for membrane targeting. Post-translationally, N-glycosylated. In terms of processing, phosphorylated on tyrosine residues. Phosphorylation increases in response to NRG1; this inhibits channel activity. Phosphorylated by PKA. Phosphorylation at Ser-446 regulates channel activity by down-regulating expression at the cell membrane. In terms of tissue distribution, detected in hippocampus, in the middle third of the molecular layer of the dentate gyrus and in stratum radiatum and stratum oriens. Detected in the mossy fiber zone in the hippocampus CA3 region, at or near axon terminals. Detected in brain cortex, at basket cell terminals. Detected adjacent to nodes of Ranvier in juxtaparanodal zones in spinal cord nerve fibers, but also in paranodal regions in some myelinated spinal cord axons. Detected in juxtaparanodal regions adjacent to the nodes of Ranvier in myelinated axons in cerebellar white matter. Detected in sensory neurons. Detected in neurons from the medial nucleus of the trapezoid body. Detected in basolateral amygdala. Detected in the paraventricular nucleus of the hypothalamus. Detected in the islet of Langerhans (at protein level).

The protein localises to the cell membrane. It localises to the membrane. Its subcellular location is the cell projection. It is found in the axon. The protein resides in the cytoplasmic vesicle. The protein localises to the perikaryon. It localises to the endoplasmic reticulum. Its subcellular location is the dendrite. It is found in the cell junction. The protein resides in the synapse. The protein localises to the presynapse. It localises to the presynaptic cell membrane. It carries out the reaction K(+)(in) = K(+)(out). Its activity is regulated as follows. Inhibited by 4-aminopyridine (4-AP) and by tetraethylammonium (TEA). Inhibited by kaliotoxin (KTX). Its function is as follows. Voltage-gated potassium channel that mediates transmembrane potassium transport in excitable membranes, primarily in the brain and the central nervous system, but also in the kidney. Contributes to the regulation of the membrane potential and nerve signaling, and prevents neuronal hyperexcitability. Forms tetrameric potassium-selective channels through which potassium ions pass in accordance with their electrochemical gradient. The channel alternates between opened and closed conformations in response to the voltage difference across the membrane. Can form functional homotetrameric channels and heterotetrameric channels that contain variable proportions of KCNA1, KCNA2, KCNA4, KCNA5, KCNA6, KCNA7, and possibly other family members as well; channel properties depend on the type of alpha subunits that are part of the channel. Channel properties are modulated by cytoplasmic beta subunits that regulate the subcellular location of the alpha subunits and promote rapid inactivation of delayed rectifier potassium channels. In vivo, membranes probably contain a mixture of heteromeric potassium channel complexes, making it difficult to assign currents observed in intact tissues to any particular potassium channel family member. Homotetrameric KCNA1 forms a delayed-rectifier potassium channel that opens in response to membrane depolarization, followed by slow spontaneous channel closure. In contrast, a heterotetrameric channel formed by KCNA1 and KCNA4 shows rapid inactivation. Regulates neuronal excitability in hippocampus, especially in mossy fibers and medial perforant path axons, preventing neuronal hyperexcitability. Response to toxins that are selective for KCNA1, respectively for KCNA2, suggests that heteromeric potassium channels composed of both KCNA1 and KCNA2 play a role in pacemaking and regulate the output of deep cerebellar nuclear neurons. May function as down-stream effector for G protein-coupled receptors and inhibit GABAergic inputs to basolateral amygdala neurons. May contribute to the regulation of neurotransmitter release, such as gamma-aminobutyric acid (GABA) release. Plays a role in regulating the generation of action potentials and preventing hyperexcitability in myelinated axons of the vagus nerve, and thereby contributes to the regulation of heart contraction. Required for normal neuromuscular responses. Regulates the frequency of neuronal action potential firing in response to mechanical stimuli, and plays a role in the perception of pain caused by mechanical stimuli, but does not play a role in the perception of pain due to heat stimuli. Required for normal responses to auditory stimuli and precise location of sound sources, but not for sound perception. The use of toxins that block specific channels suggest that it contributes to the regulation of the axonal release of the neurotransmitter dopamine. Required for normal postnatal brain development and normal proliferation of neuronal precursor cells in the brain. Plays a role in the reabsorption of Mg(2+) in the distal convoluted tubules in the kidney and in magnesium ion homeostasis, probably via its effect on the membrane potential. This is Potassium voltage-gated channel subfamily A member 1 from Rattus norvegicus (Rat).